The sequence spans 289 residues: Protoheme IX farnesyltransferase 2 (289 aa).

9 consecutive transmembrane segments (helical) span residues 1–21 (MIKP…FLLA), 28–48 (LTLM…GCGL), 76–96 (YSVL…LAIF), 100–120 (IALL…SLYM), 125–145 (VYGT…GYCA), 155–175 (VILL…IAIF), 199–219 (LHIV…PLAG), 221–241 (TGIA…GMAL), and 260–280 (CSIV…QLVV).

The protein belongs to the UbiA prenyltransferase family. Protoheme IX farnesyltransferase subfamily.

Its subcellular location is the cell inner membrane. It carries out the reaction heme b + (2E,6E)-farnesyl diphosphate + H2O = Fe(II)-heme o + diphosphate. It participates in porphyrin-containing compound metabolism; heme O biosynthesis; heme O from protoheme: step 1/1. In terms of biological role, converts heme B (protoheme IX) to heme O by substitution of the vinyl group on carbon 2 of heme B porphyrin ring with a hydroxyethyl farnesyl side group. In Shewanella woodyi (strain ATCC 51908 / MS32), this protein is Protoheme IX farnesyltransferase 2.